A 201-amino-acid chain; its full sequence is ATP-dependent Clp protease proteolytic subunit (201 aa).

The active-site Nucleophile is the Ser101. His126 is an active-site residue.

The protein belongs to the peptidase S14 family. Fourteen ClpP subunits assemble into 2 heptameric rings which stack back to back to give a disk-like structure with a central cavity, resembling the structure of eukaryotic proteasomes.

The protein localises to the cytoplasm. The catalysed reaction is Hydrolysis of proteins to small peptides in the presence of ATP and magnesium. alpha-casein is the usual test substrate. In the absence of ATP, only oligopeptides shorter than five residues are hydrolyzed (such as succinyl-Leu-Tyr-|-NHMec, and Leu-Tyr-Leu-|-Tyr-Trp, in which cleavage of the -Tyr-|-Leu- and -Tyr-|-Trp bonds also occurs).. In terms of biological role, cleaves peptides in various proteins in a process that requires ATP hydrolysis. Has a chymotrypsin-like activity. Plays a major role in the degradation of misfolded proteins. The chain is ATP-dependent Clp protease proteolytic subunit from Francisella philomiragia subsp. philomiragia (strain ATCC 25017 / CCUG 19701 / FSC 153 / O#319-036).